Consider the following 190-residue polypeptide: Glutathione peroxidase 2 (190 aa).

U40 is a catalytic residue. Position 40 (U40) is a non-standard amino acid, selenocysteine.

Belongs to the glutathione peroxidase family. As to quaternary structure, homotetramer.

The protein resides in the cytoplasm. The protein localises to the cytosol. It catalyses the reaction 2 glutathione + H2O2 = glutathione disulfide + 2 H2O. It carries out the reaction a hydroperoxy polyunsaturated fatty acid + 2 glutathione = a hydroxy polyunsaturated fatty acid + glutathione disulfide + H2O. The catalysed reaction is tert-butyl hydroperoxide + 2 glutathione = tert-butanol + glutathione disulfide + H2O. The enzyme catalyses cumene hydroperoxide + 2 glutathione = 2-phenylpropan-2-ol + glutathione disulfide + H2O. It catalyses the reaction (13S)-hydroperoxy-(9Z,11E)-octadecadienoate + 2 glutathione = (13S)-hydroxy-(9Z,11E)-octadecadienoate + glutathione disulfide + H2O. It carries out the reaction (5S)-hydroperoxy-(6E,8Z,11Z,14Z)-eicosatetraenoate + 2 glutathione = (5S)-hydroxy-(6E,8Z,11Z,14Z)-eicosatetraenoate + glutathione disulfide + H2O. The catalysed reaction is (12R)-hydroperoxy-(5Z,8Z,10E,14Z)-eicosatetraenoate + 2 glutathione = (12R)-hydroxy-(5Z,8Z,10E,14Z)-eicosatetraenoate + glutathione disulfide + H2O. The enzyme catalyses (15S)-hydroperoxy-(5Z,8Z,11Z,13E)-eicosatetraenoate + 2 glutathione = (15S)-hydroxy-(5Z,8Z,11Z,13E)-eicosatetraenoate + glutathione disulfide + H2O. Functionally, catalyzes the reduction of hydroperoxides in a glutathione-dependent manner thus regulating cellular redox homeostasis. Can reduce small soluble hydroperoxides such as H2O2, cumene hydroperoxide and tert-butyl hydroperoxide, as well as several fatty acid-derived hydroperoxides. Cannot reduce phosphatidycholine hydroperoxide. The polypeptide is Glutathione peroxidase 2 (GPX2) (Sapajus apella (Brown-capped capuchin)).